Consider the following 187-residue polypeptide: 1,6-anhydro-N-acetylmuramyl-L-alanine amidase AmpD (187 aa).

Residues S29–P167 enclose the N-acetylmuramoyl-L-alanine amidase domain. Zn(2+) is bound at residue H34. E116 (proton acceptor) is an active-site residue. The Zn(2+) site is built by H154 and D164.

The protein belongs to the N-acetylmuramoyl-L-alanine amidase 2 family. The cofactor is Zn(2+).

It is found in the cytoplasm. It catalyses the reaction Hydrolyzes the link between N-acetylmuramoyl residues and L-amino acid residues in certain cell-wall glycopeptides.. Functionally, involved in cell wall peptidoglycan recycling. Specifically cleaves the amide bond between the lactyl group of N-acetylmuramic acid and the alpha-amino group of the L-alanine in degradation products containing an anhydro N-acetylmuramyl moiety. The protein is 1,6-anhydro-N-acetylmuramyl-L-alanine amidase AmpD (ampD) of Salmonella typhimurium (strain LT2 / SGSC1412 / ATCC 700720).